The chain runs to 198 residues: Recombination protein RecR (198 aa).

A C4-type zinc finger spans residues 57–72 (CSICGNLTDDDPCHIC). The region spanning 80-175 (ETILVVEASK…KVTRLARGLA (96 aa)) is the Toprim domain.

Belongs to the RecR family.

May play a role in DNA repair. It seems to be involved in an RecBC-independent recombinational process of DNA repair. It may act with RecF and RecO. The protein is Recombination protein RecR of Streptococcus equi subsp. zooepidemicus (strain MGCS10565).